The primary structure comprises 266 residues: MRLIPLSTAEQVGKWAARHIVNRINAFKPTADRPFVLGLPTGGTPLTAYKALVEMHKAGEVSFKHVVTFNMDEYVGLPKEHPESYHSFMHRNFFDHVDIPAENINLLNGNAPDIDAECRQYEEKIRSYGKIHLFMGGVGNDGHIAFNEPASSLASRTRIKTLTHDTRVANSRFFDGDVNQVPKYALTVGVGTLLDAEEVMILVLGHQKAQALQAAVEGNVNHMWTISCLQLHPKAVVVCDEPSTMELKVKTLKYFNELEAENIKGL.

Asp-72 serves as the catalytic Proton acceptor; for enolization step. The active-site For ring-opening step is the Asp-141. His-143 acts as the Proton acceptor; for ring-opening step in catalysis. Catalysis depends on Glu-148, which acts as the For ring-opening step.

It belongs to the glucosamine/galactosamine-6-phosphate isomerase family. NagB subfamily. As to quaternary structure, homohexamer.

It catalyses the reaction alpha-D-glucosamine 6-phosphate + H2O = beta-D-fructose 6-phosphate + NH4(+). It participates in amino-sugar metabolism; N-acetylneuraminate degradation; D-fructose 6-phosphate from N-acetylneuraminate: step 5/5. Allosterically activated by N-acetylglucosamine 6-phosphate (GlcNAc6P). Its function is as follows. Catalyzes the reversible isomerization-deamination of glucosamine 6-phosphate (GlcN6P) to form fructose 6-phosphate (Fru6P) and ammonium ion. The sequence is that of Glucosamine-6-phosphate deaminase from Salmonella typhimurium (strain LT2 / SGSC1412 / ATCC 700720).